The primary structure comprises 780 residues: Acyl-CoA dehydrogenase family member 11 (780 aa).

N6-acetyllysine is present on Lys177. Phosphotyrosine is present on Tyr324. Lys391 bears the N6-succinyllysine mark. FAD-binding positions include 504–514 (FCMTEPDVASS) and 538–540 (WSS). Ser514 contributes to the substrate binding site. 629 to 632 (GPGR) contacts substrate. Residues Arg657, Gln727, and 727–731 (QVCGG) each bind FAD. Gly755 contacts substrate. 756–758 (PDE) contributes to the FAD binding site.

Belongs to the acyl-CoA dehydrogenase family. As to quaternary structure, homodimer. The cofactor is FAD. As to expression, widely expressed with highest levels in brain followed by liver, heart and kidney.

The protein localises to the peroxisome. The protein resides in the mitochondrion membrane. The catalysed reaction is a 2,3-saturated acyl-CoA + oxidized [electron-transfer flavoprotein] + H(+) = a (2E)-enoyl-CoA + reduced [electron-transfer flavoprotein]. It carries out the reaction docosanoyl-CoA + oxidized [electron-transfer flavoprotein] + H(+) = (2E)-docosenoyl-CoA + reduced [electron-transfer flavoprotein]. It catalyses the reaction tetracosanoyl-CoA + oxidized [electron-transfer flavoprotein] + H(+) = (2E)-tetracosenoyl-CoA + reduced [electron-transfer flavoprotein]. The enzyme catalyses eicosanoyl-CoA + oxidized [electron-transfer flavoprotein] + H(+) = (2E)-eicosenoyl-CoA + reduced [electron-transfer flavoprotein]. The catalysed reaction is hexacosanoyl-CoA + oxidized [electron-transfer flavoprotein] + H(+) = (2E)-hexacosenoyl-CoA + reduced [electron-transfer flavoprotein]. It carries out the reaction tricosanoyl-CoA + oxidized [electron-transfer flavoprotein] + H(+) = (2E)-tricosenoyl-CoA + reduced [electron-transfer flavoprotein]. Its pathway is lipid metabolism; fatty acid beta-oxidation. Functionally, acyl-CoA dehydrogenase, that exhibits maximal activity towards saturated C22-CoA. Probably participates in beta-oxydation and energy production but could also play a role in the metabolism of specific fatty acids to control fatty acids composition of cellular lipids in brain. The chain is Acyl-CoA dehydrogenase family member 11 (ACAD11) from Homo sapiens (Human).